The following is a 763-amino-acid chain: Phosphoglycerol transferase I (763 aa).

A run of 4 helical transmembrane segments spans residues 1-21, 26-46, 77-97, and 108-128; these read MSEL…AWKA, WWFA…ITLF, ILPG…LGWI, and FGYS…SPAF.

Belongs to the OpgB family.

The protein resides in the cell inner membrane. The enzyme catalyses a phosphatidylglycerol + a membrane-derived-oligosaccharide D-glucose = a 1,2-diacyl-sn-glycerol + a membrane-derived-oligosaccharide 6-(glycerophospho)-D-glucose.. Its pathway is glycan metabolism; osmoregulated periplasmic glucan (OPG) biosynthesis. Functionally, transfers a phosphoglycerol residue from phosphatidylglycerol to the membrane-bound nascent glucan backbones. The chain is Phosphoglycerol transferase I from Escherichia coli O127:H6 (strain E2348/69 / EPEC).